We begin with the raw amino-acid sequence, 413 residues long: Serine hydroxymethyltransferase (413 aa).

(6S)-5,6,7,8-tetrahydrofolate-binding positions include Leu-119 and 123–125; that span reads GHL. Residue Lys-228 is modified to N6-(pyridoxal phosphate)lysine. 351–353 serves as a coordination point for (6S)-5,6,7,8-tetrahydrofolate; sequence SPF.

Belongs to the SHMT family. As to quaternary structure, homodimer. Pyridoxal 5'-phosphate is required as a cofactor.

It localises to the cytoplasm. It catalyses the reaction (6R)-5,10-methylene-5,6,7,8-tetrahydrofolate + glycine + H2O = (6S)-5,6,7,8-tetrahydrofolate + L-serine. It participates in one-carbon metabolism; tetrahydrofolate interconversion. It functions in the pathway amino-acid biosynthesis; glycine biosynthesis; glycine from L-serine: step 1/1. Its function is as follows. Catalyzes the reversible interconversion of serine and glycine with tetrahydrofolate (THF) serving as the one-carbon carrier. This reaction serves as the major source of one-carbon groups required for the biosynthesis of purines, thymidylate, methionine, and other important biomolecules. Also exhibits THF-independent aldolase activity toward beta-hydroxyamino acids, producing glycine and aldehydes, via a retro-aldol mechanism. This Clostridium botulinum (strain Langeland / NCTC 10281 / Type F) protein is Serine hydroxymethyltransferase.